Here is a 387-residue protein sequence, read N- to C-terminus: Lactosylceramide alpha-2,3-sialyltransferase (387 aa).

The Cytoplasmic portion of the chain corresponds to 1-33; that stretch reads MPNEFTSAKLRSDCSRTSLQWYTQTQHKMRRPS. Residues 34 to 54 form a helical; Signal-anchor for type II membrane protein membrane-spanning segment; it reads LLLKDILKCMLVVFGVWLLYI. Residues 55 to 387 lie on the Extracellular side of the membrane; the sequence is LKLNYTAEEC…VVQDLSGGIH (333 aa). N-linked (GlcNAc...) asparagine glycosylation is found at Asn58 and Asn208. Cys167 and Cys325 are joined by a disulfide.

The protein belongs to the glycosyltransferase 29 family.

Its subcellular location is the golgi apparatus membrane. The catalysed reaction is a beta-D-Gal-(1-&gt;4)-beta-D-Glc-(1&lt;-&gt;1)-Cer(d18:1(4E)) + CMP-N-acetyl-beta-neuraminate = a ganglioside GM3 (d18:1(4E)) + CMP + H(+). It carries out the reaction ganglioside GA2 (d18:1(4E)/18:0) + CMP-N-acetyl-beta-neuraminate = ganglioside GM2 (d18:1(4E)/18:0) + CMP + H(+). The enzyme catalyses a beta-D-Gal-(1&lt;-&gt;1')-ceramide + CMP-N-acetyl-beta-neuraminate = N-acetyl-alpha-neuraminosyl-(2-&gt;3)-beta-D-galactosyl-(1&lt;-&gt;1')-ceramide + CMP + H(+). It catalyses the reaction ganglioside GA1 (d18:1(4E)/18:0) + CMP-N-acetyl-beta-neuraminate = ganglioside GM1 (d18:1(4E)/18:0) + CMP + H(+). Functionally, transfers the sialyl group (N-acetyl-alpha-neuraminyl or NeuAc) from CMP-NeuAc to the non-reducing terminal galactose (Gal) of glycosphingolipids forming gangliosides (important molecules involved in the regulation of multiple cellular processes, including cell proliferation and differentiation, apoptosis, embryogenesis, development, and oncogenesis). Mainly involved in the biosynthesis of ganglioside GM3 but can also use different glycolipids as substrate acceptors such as D-galactosylceramide (GalCer), asialo-GM2 (GA2) and asialo-GM1 (GA1), although less preferentially than beta-D-Gal-(1-&gt;4)-beta-D-Glc-(1&lt;-&gt;1)-Cer (LacCer). In Rattus norvegicus (Rat), this protein is Lactosylceramide alpha-2,3-sialyltransferase (St3gal5).